The following is a 73-amino-acid chain: MKTKRPHAKSVENFNRYRFYAEKAAKEEQAGNYEEAETHWDLAMLSASPENKEWAIRRRDFCQRMHQRPFEGE.

This is an uncharacterized protein from Haemophilus influenzae (strain ATCC 51907 / DSM 11121 / KW20 / Rd).